A 411-amino-acid polypeptide reads, in one-letter code: Chorismate synthase (411 aa).

NADP(+) is bound by residues Arg-40 and Arg-46. FMN is bound by residues 135 to 137 (RAS) and 256 to 257 (QA). The disordered stretch occupies residues 278–299 (HDGIARGADGRPRRTSDRAGGI). Over residues 285-294 (ADGRPRRTSD) the composition is skewed to basic and acidic residues. Residues Ala-301, 316–320 (KPIAT), and Arg-342 each bind FMN.

It belongs to the chorismate synthase family. In terms of assembly, homotetramer. The cofactor is FMNH2.

The catalysed reaction is 5-O-(1-carboxyvinyl)-3-phosphoshikimate = chorismate + phosphate. It functions in the pathway metabolic intermediate biosynthesis; chorismate biosynthesis; chorismate from D-erythrose 4-phosphate and phosphoenolpyruvate: step 7/7. Functionally, catalyzes the anti-1,4-elimination of the C-3 phosphate and the C-6 proR hydrogen from 5-enolpyruvylshikimate-3-phosphate (EPSP) to yield chorismate, which is the branch point compound that serves as the starting substrate for the three terminal pathways of aromatic amino acid biosynthesis. This reaction introduces a second double bond into the aromatic ring system. This is Chorismate synthase from Micrococcus luteus (strain ATCC 4698 / DSM 20030 / JCM 1464 / CCM 169 / CCUG 5858 / IAM 1056 / NBRC 3333 / NCIMB 9278 / NCTC 2665 / VKM Ac-2230) (Micrococcus lysodeikticus).